A 113-amino-acid polypeptide reads, in one-letter code: MLPTRHRMRTSAHFSTTVRSGARGGRRNVVVSVRLSTGAPSRVGFVVSKAVGNAVTRNKVKRRLRELSAETVRERPEGMDLVVRALPPAATAPWDELARDYRSAVATAVRRCA.

Residues 1-10 are compositionally biased toward basic residues; sequence MLPTRHRMRT. The segment at 1 to 23 is disordered; sequence MLPTRHRMRTSAHFSTTVRSGAR.

It belongs to the RnpA family. In terms of assembly, consists of a catalytic RNA component (M1 or rnpB) and a protein subunit.

It catalyses the reaction Endonucleolytic cleavage of RNA, removing 5'-extranucleotides from tRNA precursor.. In terms of biological role, RNaseP catalyzes the removal of the 5'-leader sequence from pre-tRNA to produce the mature 5'-terminus. It can also cleave other RNA substrates such as 4.5S RNA. The protein component plays an auxiliary but essential role in vivo by binding to the 5'-leader sequence and broadening the substrate specificity of the ribozyme. The polypeptide is Ribonuclease P protein component (Kocuria rhizophila (strain ATCC 9341 / DSM 348 / NBRC 103217 / DC2201)).